The chain runs to 833 residues: Multiple RNA-binding domain-containing protein 1 (833 aa).

Positions 2–83 (SRIIIKNIPR…SRIEVHRALD (82 aa)) constitute an RRM 1 domain. Residues 160–251 (ENEEVFDTEI…DAQAPLSDDE (92 aa)) are disordered. Composition is skewed to basic and acidic residues over residues 188 to 205 (AAKR…HDST) and 213 to 222 (DGREKSSSEL). RRM domains are found at residues 323 to 401 (KRLF…PAKA), 506 to 578 (NVLL…KAPR), 619 to 702 (ATIY…LSHQ), and 721 to 798 (TKIL…YASN).

Belongs to the RRM MRD1 family.

The protein resides in the nucleus. Functionally, involved in pre-rRNA processing. The chain is Multiple RNA-binding domain-containing protein 1 (mrd1) from Schizosaccharomyces pombe (strain 972 / ATCC 24843) (Fission yeast).